Reading from the N-terminus, the 225-residue chain is Thymidylate kinase (225 aa).

9–16 (GIEGCGKT) contributes to the ATP binding site.

Belongs to the thymidylate kinase family.

The catalysed reaction is dTMP + ATP = dTDP + ADP. In terms of biological role, phosphorylation of dTMP to form dTDP in both de novo and salvage pathways of dTTP synthesis. In Citrifermentans bemidjiense (strain ATCC BAA-1014 / DSM 16622 / JCM 12645 / Bem) (Geobacter bemidjiensis), this protein is Thymidylate kinase.